Reading from the N-terminus, the 359-residue chain is tRNA N6-adenosine threonylcarbamoyltransferase (359 aa).

Fe cation is bound by residues histidine 115 and histidine 119. Residues 137-141 (LVSGG), aspartate 170, glycine 183, and asparagine 283 contribute to the substrate site. Aspartate 311 serves as a coordination point for Fe cation. Positions 328–359 (APDSLDLAPRSRWPLDEKSAPLIGTGRRGAKA) are disordered.

The protein belongs to the KAE1 / TsaD family. Requires Fe(2+) as cofactor.

It localises to the cytoplasm. The catalysed reaction is L-threonylcarbamoyladenylate + adenosine(37) in tRNA = N(6)-L-threonylcarbamoyladenosine(37) in tRNA + AMP + H(+). In terms of biological role, required for the formation of a threonylcarbamoyl group on adenosine at position 37 (t(6)A37) in tRNAs that read codons beginning with adenine. Is involved in the transfer of the threonylcarbamoyl moiety of threonylcarbamoyl-AMP (TC-AMP) to the N6 group of A37, together with TsaE and TsaB. TsaD likely plays a direct catalytic role in this reaction. The chain is tRNA N6-adenosine threonylcarbamoyltransferase from Brucella anthropi (strain ATCC 49188 / DSM 6882 / CCUG 24695 / JCM 21032 / LMG 3331 / NBRC 15819 / NCTC 12168 / Alc 37) (Ochrobactrum anthropi).